The chain runs to 515 residues: Putative acetolactate synthase large subunit IlvX (515 aa).

Position 48 (glutamate 48) interacts with thiamine diphosphate. FAD contacts are provided by residues 249–269 (FAEG…AGAR) and 283–302 (DLVP…GAAD). The segment at 357-436 (TCGVLLPQAT…VTTVIYNNGA (80 aa)) is thiamine pyrophosphate binding. Positions 407 and 434 each coordinate Mg(2+).

It belongs to the TPP enzyme family. In terms of assembly, heterodimer of large catalytic subunit and small regulatory subunit. Requires Mg(2+) as cofactor. Thiamine diphosphate serves as cofactor.

It carries out the reaction 2 pyruvate + H(+) = (2S)-2-acetolactate + CO2. Its pathway is amino-acid biosynthesis; L-isoleucine biosynthesis; L-isoleucine from 2-oxobutanoate: step 1/4. The protein operates within amino-acid biosynthesis; L-valine biosynthesis; L-valine from pyruvate: step 1/4. Its function is as follows. Catalyzes the conversion of 2 pyruvate molecules into acetolactate in the first common step of the biosynthetic pathway of the branched-amino acids such as leucine, isoleucine, and valine. The chain is Putative acetolactate synthase large subunit IlvX (ilvX) from Mycobacterium tuberculosis (strain ATCC 25618 / H37Rv).